A 446-amino-acid chain; its full sequence is 3-phosphoshikimate 1-carboxyvinyltransferase (446 aa).

Residues lysine 30, serine 31, and arginine 35 each contribute to the 3-phosphoshikimate site. Position 30 (lysine 30) interacts with phosphoenolpyruvate. Phosphoenolpyruvate-binding residues include glycine 112 and arginine 140. 3-phosphoshikimate-binding residues include serine 186, serine 187, glutamine 188, serine 215, glutamate 334, and histidine 361. Glutamine 188 lines the phosphoenolpyruvate pocket. Glutamate 334 acts as the Proton acceptor in catalysis. Phosphoenolpyruvate is bound by residues arginine 365, arginine 406, and lysine 431.

It belongs to the EPSP synthase family. In terms of assembly, monomer.

It localises to the cytoplasm. It carries out the reaction 3-phosphoshikimate + phosphoenolpyruvate = 5-O-(1-carboxyvinyl)-3-phosphoshikimate + phosphate. Its pathway is metabolic intermediate biosynthesis; chorismate biosynthesis; chorismate from D-erythrose 4-phosphate and phosphoenolpyruvate: step 6/7. Functionally, catalyzes the transfer of the enolpyruvyl moiety of phosphoenolpyruvate (PEP) to the 5-hydroxyl of shikimate-3-phosphate (S3P) to produce enolpyruvyl shikimate-3-phosphate and inorganic phosphate. This Streptomyces avermitilis (strain ATCC 31267 / DSM 46492 / JCM 5070 / NBRC 14893 / NCIMB 12804 / NRRL 8165 / MA-4680) protein is 3-phosphoshikimate 1-carboxyvinyltransferase.